A 104-amino-acid polypeptide reads, in one-letter code: Putative zinc finger protein ORF104b (104 aa).

The C2H2-type zinc finger occupies 62-85 (YECKYCHTRYLSHTGIVYHLEREH).

The sequence is that of Putative zinc finger protein ORF104b from Acidianus sp. F28 (AFV-2).